The following is a 1227-amino-acid chain: Peroxisomal ATPase PEX1 (1227 aa).

Disordered stretches follow at residues 251-311 (NNKN…NKKN) and 443-480 (PPTS…TNNM). The span at 264–289 (GDEEEDDDDNEEFDDDDDDDNNNNED) shows a compositional bias: acidic residues. Coiled-coil stretches lie at residues 282–315 (DDNN…NKTI) and 454–519 (NNLD…NQFQ). Residues 290–299 (DTSKLQKQLD) show a composition bias toward basic and acidic residues. Residues 609–616 (GSHGSGKS) and 907–914 (GPTGCGKT) contribute to the ATP site. Over residues 1096–1107 (KKRKRKEKEDQS) the composition is skewed to basic and acidic residues. Residues 1096–1132 (KKRKRKEKEDQSNKNSSQQQDDFIIFQPKNNDNSISK) form a disordered region. Low complexity predominate over residues 1108–1117 (NKNSSQQQDD). Over residues 1123-1132 (PKNNDNSISK) the composition is skewed to polar residues.

It belongs to the AAA ATPase family. Interacts with PEX6; forming the PEX1-PEX6 AAA ATPase complex, which is composed of a heterohexamer formed by a trimer of PEX1-PEX6 dimers.

It localises to the cytoplasm. The protein resides in the cytosol. It is found in the peroxisome membrane. It carries out the reaction ATP + H2O = ADP + phosphate + H(+). In terms of biological role, component of the PEX1-PEX6 AAA ATPase complex, a protein dislocase complex that mediates the ATP-dependent extraction of the PEX5 receptor from peroxisomal membranes, an essential step for PEX5 recycling. Specifically recognizes PEX5 monoubiquitinated at 'Cys-11', and pulls it out of the peroxisome lumen through the PEX2-PEX10-PEX12 retrotranslocation channel. Extraction by the PEX1-PEX6 AAA ATPase complex is accompanied by unfolding of the TPR repeats and release of bound cargo from PEX5. The chain is Peroxisomal ATPase PEX1 (pex1) from Dictyostelium discoideum (Social amoeba).